A 232-amino-acid chain; its full sequence is MLKLTDITWLYQHLPMRFSLTVERGEQVAILGPSGAGKSTLLNLIAGFLTPASGSLTIDGVDHTTTPPSRRPVSMLFQENNLFSHLTVAQNIGLGLNPGLKLNAAQQEKMHAIARQMGIDNLMARLPGELSGGQRQRVALARCLVREQPILLLDEPFSALDPALRQEMLTLVSTSCQQQKMTLLMVSHSVEDAARIATRSVVVADGRIAWQGKTEELLSGKASASAILGITG.

An ABC transporter domain is found at 2–230 (LKLTDITWLY…KASASAILGI (229 aa)). 32–39 (GPSGAGKS) is a binding site for ATP.

It belongs to the ABC transporter superfamily. Thiamine importer (TC 3.A.1.19.1) family. As to quaternary structure, the complex is composed of two ATP-binding proteins (ThiQ), two transmembrane proteins (ThiP) and a solute-binding protein (ThiB).

Its subcellular location is the cell inner membrane. The catalysed reaction is thiamine(out) + ATP + H2O = thiamine(in) + ADP + phosphate + H(+). Functionally, part of the ABC transporter complex ThiBPQ involved in thiamine import. Responsible for energy coupling to the transport system. The sequence is that of Thiamine import ATP-binding protein ThiQ from Shigella boydii serotype 4 (strain Sb227).